We begin with the raw amino-acid sequence, 153 residues long: Superoxide dismutase [Cu-Zn] (153 aa).

The Cu cation site is built by His-45, His-47, and His-62. A disulfide bridge connects residues Cys-56 and Cys-145. Residues His-62, His-70, His-79, and Asp-82 each contribute to the Zn(2+) site. Residue His-119 coordinates Cu cation.

The protein belongs to the Cu-Zn superoxide dismutase family. Homodimer. Cu cation serves as cofactor. Zn(2+) is required as a cofactor.

It localises to the cytoplasm. The catalysed reaction is 2 superoxide + 2 H(+) = H2O2 + O2. In terms of biological role, destroys radicals which are normally produced within the cells and which are toxic to biological systems. In Drosophila yakuba (Fruit fly), this protein is Superoxide dismutase [Cu-Zn].